Here is a 538-residue protein sequence, read N- to C-terminus: Thiamine transport system permease protein ThiP (538 aa).

Transmembrane regions (helical) follow at residues 19–39 (VVVI…IFAL), 57–77 (LILF…FFGL), 97–117 (LMSL…IGIY), 141–161 (LSGI…QLFL), 202–222 (FSLI…LGGG), 242–262 (LPKA…LFSL), 293–313 (ILVL…ILIS), 337–357 (LSIA…LLLL), 376–396 (AGMV…FLLL), 406–426 (LFII…LRIL), 466–486 (YAFA…ALFG), and 509–529 (AAVT…FIHT). The ABC transmembrane type-1 1 domain occupies 58-263 (ILFSFGQALL…VFCLILFSLT (206 aa)). An ABC transmembrane type-1 2 domain is found at 333 to 528 (LGYSLSIAPL…LCGILFAFIH (196 aa)).

This sequence belongs to the binding-protein-dependent transport system permease family. CysTW subfamily. As to quaternary structure, the complex is composed of two ATP-binding proteins (ThiQ), two transmembrane proteins (ThiP) and a solute-binding protein (ThiB).

Its subcellular location is the cell inner membrane. Part of the ABC transporter complex ThiBPQ involved in thiamine import. Probably responsible for the translocation of the substrate across the membrane. The protein is Thiamine transport system permease protein ThiP (thiP) of Haemophilus influenzae (strain ATCC 51907 / DSM 11121 / KW20 / Rd).